The sequence spans 259 residues: Leucine-rich repeat-containing protein 3B (259 aa).

A signal peptide spans 1-33 (MNLVDLWLSRSLSMCLLLQSFVLMILCFHSASM). The region spanning 34–64 (CPKGCLCSSSGGLNVTCSNANLKEIPRDLPP) is the LRRNT domain. Residue Asn47 is glycosylated (N-linked (GlcNAc...) asparagine). 3 LRR repeats span residues 65 to 86 (ETVLLYLDSNQITSIPNEIFKD), 89 to 110 (QLRVLNLSKNGIEFIDEHAFKG), and 114 to 135 (TLQTLDLSDNRIQSVHKNAFNN). Asn94 is a glycosylation site (N-linked (GlcNAc...) asparagine). In terms of domain architecture, LRRCT spans 145–197 (NPWHCDCTLQQVLRSMASNHETAHNVICKTSVLDEHAGRPFLNAANDADLCNL). Residues 205–225 (AMLVTMFGWFTMVISYVVYYV) traverse the membrane as a helical segment.

The protein belongs to the LRRC3 family.

It localises to the membrane. The sequence is that of Leucine-rich repeat-containing protein 3B (Lrrc3b) from Mus musculus (Mouse).